The sequence spans 176 residues: Glyoxalase domain-containing protein RDO1 (176 aa).

Residues 53-172 enclose the VOC domain; the sequence is SLDHLVITCH…DNNLIELSSY (120 aa). E168 acts as the Proton donor/acceptor in catalysis.

It belongs to the glyoxalase I family.

The protein operates within secondary metabolite biosynthesis. In terms of biological role, glyoxalase domain-containing protein; part of the gene cluster that mediates the biosynthesis of itaconic acid and 2-hydroxyparaconate. Cis-aconitate is secreted by the mitochondrial tricarboxylate transporter MTT1. In the cytosol cis-aconitate is converted into trans-aconitate via isomerization by the aconitate-delta-isomerase ADI1. Decarboxylation of trans-aconitate by the trans-aconitate decarboxylase TAD1 then leads then to the production of itaconic acid. The cytochrome P450 monooxygenase CYP3 further converts itaconate to 2-hydroxyparaconate via oxidation of the double bond, leading to a transient epoxide, which can subsequently be lactonized to produce 2-hydroxyparaconate. Secretion of itaconate and possibly 2-hydroxyparaconate into the medium is mediated by the major facilitator ITP1. The glyoxalase domain-containing protein RDO1 is not involved in the biosynthesis of itaconate and 2-hydroxyparaconate, however, it might play a role in the further conversion of 2-hydroxyparaconate to itatartarate. In Mycosarcoma maydis (Corn smut fungus), this protein is Glyoxalase domain-containing protein RDO1.